The sequence spans 636 residues: Leucine-rich repeat and fibronectin type-III domain-containing protein 4 (636 aa).

The N-terminal stretch at 1-16 is a signal peptide; sequence MAPPLLLLLLASGAAA. In terms of domain architecture, LRRNT spans 17–48; sequence CPLPCVCQNLSESLSTLCAHRGLLFVPPNVDR. The Extracellular portion of the chain corresponds to 17–518; sequence CPLPCVCQNL…LQAHVLGGTL (502 aa). Residues Asn-25 and Asn-70 are each glycosylated (N-linked (GlcNAc...) asparagine). LRR repeat units follow at residues 49 to 70, 73 to 94, 97 to 118, 121 to 142, 146 to 169, 170 to 191, and 194 to 215; these read RTVE…DFRN, GLVD…SFGD, SLRS…SLRG, NLQH…AFDD, SLED…GSMP, ALHT…VFAQ, and QLSR…PLFS. Positions 234 to 280 constitute an LRRCT domain; sequence NPLHCNCELLWLRRLARPDDLETCASPPTLAGRYFWAVPEGEFSCEP. In terms of domain architecture, Ig-like spans 281-367; it reads PLIARHTQRL…GEATARVELR (87 aa). Cys-302 and Cys-351 are oxidised to a cystine. 4 N-linked (GlcNAc...) asparagine glycosylation sites follow: Asn-324, Asn-333, Asn-376, and Asn-440. The Fibronectin type-III domain maps to 405–502; sequence SEPAVQVTEV…GCAHFSTLPA (98 aa). The helical transmembrane segment at 519–539 threads the bilayer; it reads TVAVGGVLVAALLVFTVALLV. The Cytoplasmic portion of the chain corresponds to 540 to 636; it reads RGRGAGNGRL…SAERLEESVV (97 aa). Residues 556 to 585 form a disordered region; it reads VQSQTNGGTSPMPKSHPPRSPPPRPQRSCS. The segment covering 569–580 has biased composition (pro residues); sequence KSHPPRSPPPRP. Residues Ser-585 and Ser-627 each carry the phosphoserine modification. The PDZ-binding signature appears at 633–636; the sequence is ESVV.

This sequence belongs to the LRFN family. As to quaternary structure, can form heteromeric complexes with LRFN1, LRFN2, LRFN3 and LRFN5. Unable to form homophilic interactions across cell junctions. Interacts with DLG1, DLG2 and DLG3. Also interacts with DLG4. In terms of processing, glycosylated. In terms of tissue distribution, expressed in brain and testis. In the brain, weak, but broad expression in the cerebral cortex and diencephalic nuclei. Also detected in other parts of the central nervous system, including the olfactory bulb, pons, cerebellum, and medulla oblongata, as well as in the peripheral nervous system, such as the ganglia of cranial nerves and the dorsal root ganglion during gestation.

Its subcellular location is the membrane. In terms of biological role, promotes neurite outgrowth in hippocampal neurons. May play a role in redistributing DLG4 to the cell periphery. The protein is Leucine-rich repeat and fibronectin type-III domain-containing protein 4 (Lrfn4) of Mus musculus (Mouse).